The following is a 309-amino-acid chain: HPr kinase/phosphorylase (309 aa).

Residues histidine 138 and lysine 159 contribute to the active site. Position 153–160 (153–160 (GQSGVGKS)) interacts with ATP. Serine 160 serves as a coordination point for Mg(2+). The active-site Proton acceptor; for phosphorylation activity. Proton donor; for dephosphorylation activity is aspartate 177. Residues 201–210 (LEIRGLGIIN) are important for the catalytic mechanism of both phosphorylation and dephosphorylation. A Mg(2+)-binding site is contributed by glutamate 202. The active site involves arginine 243. An important for the catalytic mechanism of dephosphorylation region spans residues 264 to 269 (PVRPGR).

This sequence belongs to the HPrK/P family. As to quaternary structure, homohexamer. Mg(2+) is required as a cofactor.

It carries out the reaction [HPr protein]-L-serine + ATP = [HPr protein]-O-phospho-L-serine + ADP + H(+). The enzyme catalyses [HPr protein]-O-phospho-L-serine + phosphate + H(+) = [HPr protein]-L-serine + diphosphate. Its function is as follows. Catalyzes the ATP- as well as the pyrophosphate-dependent phosphorylation of a specific serine residue in HPr, a phosphocarrier protein of the phosphoenolpyruvate-dependent sugar phosphotransferase system (PTS). HprK/P also catalyzes the pyrophosphate-producing, inorganic phosphate-dependent dephosphorylation (phosphorolysis) of seryl-phosphorylated HPr (P-Ser-HPr). The two antagonistic activities of HprK/P are regulated by several intracellular metabolites, which change their concentration in response to the absence or presence of rapidly metabolisable carbon sources (glucose, fructose, etc.) in the growth medium. Also phosphorylates/dephosphorylates the HPr-like catabolite repression protein crh on a specific serine residue. Therefore, by controlling the phosphorylation state of HPr and crh, HPrK/P is a sensor enzyme that plays a major role in the regulation of carbon metabolism and sugar transport: it mediates carbon catabolite repression (CCR), and regulates PTS-catalyzed carbohydrate uptake and inducer exclusion. This is HPr kinase/phosphorylase from Bacillus cereus (strain G9842).